The sequence spans 227 residues: SEVPILTTKKLAWKTAIKELLWIWQLKSNDVNDLNKMSVHIWDQWKQEDGTIGHAYGFQLGKKNRSLNGEKVDQVDYLLHQLKNNPSSRRHITMLWNPDELDAMALTPCVYETQWYVKHGKLHLEVRARSNDMALGNPFNVFQYNVLQRMIAQVTGYELGEYIFNIGDCHVYTRHIDNLKIQMEREQFEAPELWINPEVKDFYDFTIDDFKLINYKHGDKLLFEVRV.

89 to 90 is a binding site for dUMP; it reads RR. Cysteine 109 functions as the Nucleophile in the catalytic mechanism. DUMP-binding positions include 129–132, asparagine 140, and 170–172; these read RSND and HVY. Aspartate 132 is a (6R)-5,10-methylene-5,6,7,8-tetrahydrofolate binding site.

This sequence belongs to the thymidylate synthase family. Bacterial-type ThyA subfamily. As to quaternary structure, homodimer.

The protein resides in the cytoplasm. The catalysed reaction is dUMP + (6R)-5,10-methylene-5,6,7,8-tetrahydrofolate = 7,8-dihydrofolate + dTMP. It functions in the pathway pyrimidine metabolism; dTTP biosynthesis. Functionally, catalyzes the reductive methylation of 2'-deoxyuridine-5'-monophosphate (dUMP) to 2'-deoxythymidine-5'-monophosphate (dTMP) while utilizing 5,10-methylenetetrahydrofolate (mTHF) as the methyl donor and reductant in the reaction, yielding dihydrofolate (DHF) as a by-product. This enzymatic reaction provides an intracellular de novo source of dTMP, an essential precursor for DNA biosynthesis. This is Thymidylate synthase from Bacillus atrophaeus.